We begin with the raw amino-acid sequence, 327 residues long: Movement protein (327 aa).

Positions 297–327 (SASSSNTENELARVSQNIDLLKNKLKEICGE) form a coiled coil.

Belongs to the caulimoviridae movement protein family. In terms of assembly, homotrimer, through the coiled-coil domain. Interacts with VAP. May interact (via N-terminus) with host prenylated Rab acceptor protein 1D (PRA1D).

It is found in the host cell junction. The protein resides in the host plasmodesma. Its function is as follows. Transports viral genome to neighboring plant cells directly through plasmosdesmata, without any budding. The movement protein allows efficient cell to cell propagation, by bypassing the host cell wall barrier. Acts by forming tubules structures that increase the size exclusion limit (SEL) of plasmodesmata, thereby allowing viral ribonucleocapsids to spread directly to neighboring cells. The protein is Movement protein of Arabidopsis thaliana (Mouse-ear cress).